The primary structure comprises 212 residues: MKLLYDLLPVILFFLAYKFYGALPPEWILAVGVWLPVALEPDNPGHAIYLATAVAMVVMAVQLALGLAIKRRLETMPLLTAAVILVLGGATLWLHDPVFILWKPTLVNWLFALVFMAPPLFGRRTLVETLMGHALSVPRAIWSRVNLAWVVFFLVSGLANLFVAYTFSEAVWVDFKLFGMLGMTFVFVIGQAVYLGLHHREDDPHTTKGDPS.

A run of 6 helical transmembrane segments spans residues 19–39 (FYGA…PVAL), 47–67 (AIYL…ALGL), 82–102 (AVIL…FILW), 105–122 (TLVN…PLFG), 147–167 (LAWV…AYTF), and 177–197 (LFGM…YLGL).

It belongs to the YciB family.

It is found in the cell inner membrane. Its function is as follows. Plays a role in cell envelope biogenesis, maintenance of cell envelope integrity and membrane homeostasis. This Thioalkalivibrio sulfidiphilus (strain HL-EbGR7) protein is Inner membrane-spanning protein YciB.